The chain runs to 365 residues: Phospho-N-acetylmuramoyl-pentapeptide-transferase (365 aa).

The next 10 membrane-spanning stretches (helical) occupy residues 15-35 (PSGT…AVLI), 51-71 (VPVL…VPLL), 96-116 (TMGG…FAGF), 121-141 (IAVA…DWQV), 156-176 (LILQ…TAPE), 180-200 (ITFF…LAGF), 217-237 (GLAG…ALPA), 238-258 (HPGL…FIYH), 279-299 (LAAA…SGIF), and 344-364 (TQIV…SFIL).

It belongs to the glycosyltransferase 4 family. MraY subfamily. Mg(2+) serves as cofactor.

It localises to the cell inner membrane. The catalysed reaction is UDP-N-acetyl-alpha-D-muramoyl-L-alanyl-gamma-D-glutamyl-meso-2,6-diaminopimeloyl-D-alanyl-D-alanine + di-trans,octa-cis-undecaprenyl phosphate = di-trans,octa-cis-undecaprenyl diphospho-N-acetyl-alpha-D-muramoyl-L-alanyl-D-glutamyl-meso-2,6-diaminopimeloyl-D-alanyl-D-alanine + UMP. The protein operates within cell wall biogenesis; peptidoglycan biosynthesis. Its function is as follows. Catalyzes the initial step of the lipid cycle reactions in the biosynthesis of the cell wall peptidoglycan: transfers peptidoglycan precursor phospho-MurNAc-pentapeptide from UDP-MurNAc-pentapeptide onto the lipid carrier undecaprenyl phosphate, yielding undecaprenyl-pyrophosphoryl-MurNAc-pentapeptide, known as lipid I. This Picosynechococcus sp. (strain ATCC 27264 / PCC 7002 / PR-6) (Agmenellum quadruplicatum) protein is Phospho-N-acetylmuramoyl-pentapeptide-transferase.